The primary structure comprises 536 residues: CTP synthase (536 aa).

Residues 1–267 (MTKFIFVTGG…DDIVIKRLQL (267 aa)) are amidoligase domain. Ser-13 lines the CTP pocket. Ser-13 serves as a coordination point for UTP. 14–19 (SLGKGI) contacts ATP. Tyr-54 contacts L-glutamine. Asp-71 is a binding site for ATP. The Mg(2+) site is built by Asp-71 and Glu-141. CTP is bound by residues 148–150 (DIE), 188–193 (KTKPTQ), and Lys-224. UTP contacts are provided by residues 188 to 193 (KTKPTQ) and Lys-224. 240-242 (RDA) contacts ATP. Residues 293 to 535 (TIGLVGKYVS…IEASLKYQQN (243 aa)) form the Glutamine amidotransferase type-1 domain. L-glutamine is bound at residue Gly-355. Catalysis depends on Cys-382, which acts as the Nucleophile; for glutamine hydrolysis. Residues 383–386 (LGMQ), Glu-406, and Arg-463 contribute to the L-glutamine site. Residues His-508 and Glu-510 contribute to the active site.

It belongs to the CTP synthase family. In terms of assembly, homotetramer.

The enzyme catalyses UTP + L-glutamine + ATP + H2O = CTP + L-glutamate + ADP + phosphate + 2 H(+). It catalyses the reaction L-glutamine + H2O = L-glutamate + NH4(+). The catalysed reaction is UTP + NH4(+) + ATP = CTP + ADP + phosphate + 2 H(+). It participates in pyrimidine metabolism; CTP biosynthesis via de novo pathway; CTP from UDP: step 2/2. With respect to regulation, allosterically activated by GTP, when glutamine is the substrate; GTP has no effect on the reaction when ammonia is the substrate. The allosteric effector GTP functions by stabilizing the protein conformation that binds the tetrahedral intermediate(s) formed during glutamine hydrolysis. Inhibited by the product CTP, via allosteric rather than competitive inhibition. Catalyzes the ATP-dependent amination of UTP to CTP with either L-glutamine or ammonia as the source of nitrogen. Regulates intracellular CTP levels through interactions with the four ribonucleotide triphosphates. The polypeptide is CTP synthase (Staphylococcus aureus (strain COL)).